Reading from the N-terminus, the 137-residue chain is Small ribosomal subunit protein uS12 (137 aa).

It belongs to the universal ribosomal protein uS12 family. In terms of assembly, part of the 30S ribosomal subunit. Contacts proteins S8 and S17. May interact with IF1 in the 30S initiation complex.

With S4 and S5 plays an important role in translational accuracy. Functionally, interacts with and stabilizes bases of the 16S rRNA that are involved in tRNA selection in the A site and with the mRNA backbone. Located at the interface of the 30S and 50S subunits, it traverses the body of the 30S subunit contacting proteins on the other side and probably holding the rRNA structure together. The combined cluster of proteins S8, S12 and S17 appears to hold together the shoulder and platform of the 30S subunit. The sequence is that of Small ribosomal subunit protein uS12 from Lactiplantibacillus plantarum (strain ATCC BAA-793 / NCIMB 8826 / WCFS1) (Lactobacillus plantarum).